The following is a 295-amino-acid chain: Probable endonuclease 4 (295 aa).

The Zn(2+) site is built by His-78, His-118, Glu-154, Asp-188, His-191, His-225, Asp-238, His-240, and Glu-270.

It belongs to the AP endonuclease 2 family. It depends on Zn(2+) as a cofactor.

It catalyses the reaction Endonucleolytic cleavage to 5'-phosphooligonucleotide end-products.. Its function is as follows. Endonuclease IV plays a role in DNA repair. It cleaves phosphodiester bonds at apurinic or apyrimidinic (AP) sites, generating a 3'-hydroxyl group and a 5'-terminal sugar phosphate. The protein is Probable endonuclease 4 of Vibrio campbellii (strain ATCC BAA-1116).